Reading from the N-terminus, the 400-residue chain is Tyrosine--tRNA ligase (400 aa).

The 'HIGH' region motif lies at Pro-45 to His-54. The 'KMSKS' region signature appears at Lys-230 to Ser-234. ATP is bound at residue Lys-233. In terms of domain architecture, S4 RNA-binding spans Glu-339–Ile-399.

Belongs to the class-I aminoacyl-tRNA synthetase family. TyrS type 2 subfamily. Homodimer.

Its subcellular location is the cytoplasm. The enzyme catalyses tRNA(Tyr) + L-tyrosine + ATP = L-tyrosyl-tRNA(Tyr) + AMP + diphosphate + H(+). In terms of biological role, catalyzes the attachment of tyrosine to tRNA(Tyr) in a two-step reaction: tyrosine is first activated by ATP to form Tyr-AMP and then transferred to the acceptor end of tRNA(Tyr). This is Tyrosine--tRNA ligase from Helicobacter hepaticus (strain ATCC 51449 / 3B1).